Here is a 307-residue protein sequence, read N- to C-terminus: Dof zinc finger protein DOF5.4 (307 aa).

A Dof-type zinc finger spans residues 51–105; it reads LKCPRCNSLNTKFCYYNNYNLSQPRHFCKNCRRYWTKGGVLRNVPVGGGCRKAKR. Cys53, Cys56, Cys78, and Cys81 together coordinate Zn(2+). Positions 96-147 are disordered; that stretch reads VGGGCRKAKRSKTKQVPSSSSADKPTTTQDDHHVEEKSSTGSHSSSESSSLT. The span at 109-123 shows a compositional bias: polar residues; sequence KQVPSSSSADKPTTT. The span at 124 to 133 shows a compositional bias: basic and acidic residues; the sequence is QDDHHVEEKS. The span at 134 to 147 shows a compositional bias: low complexity; it reads STGSHSSSESSSLT.

The protein localises to the nucleus. Transcription factor that binds specifically to a 5'-AA[AG]G-3' consensus core sequence. Enhances the DNA binding of OBF transcription factors to OCS elements. This chain is Dof zinc finger protein DOF5.4 (DOF5.4), found in Arabidopsis thaliana (Mouse-ear cress).